Here is a 950-residue protein sequence, read N- to C-terminus: Protocadherin alpha-13 (950 aa).

An N-terminal signal peptide occupies residues 1–29 (MLSSWQGGPRPRQLLLWLLILAAWETGSG). The Extracellular portion of the chain corresponds to 30–697 (QLHYSVPEEA…GPEAALVDVN (668 aa)). 6 Cadherin domains span residues 34 to 133 (SVPE…PPIF), 134 to 242 (PESK…APEF), 243 to 350 (YQSV…APEV), 351 to 455 (TITS…APAF), 456 to 565 (AQPE…APAL), and 581 to 678 (MPRS…APQA). 2 N-linked (GlcNAc...) asparagine glycosylation sites follow: asparagine 257 and asparagine 265. The N-linked (GlcNAc...) asparagine glycan is linked to asparagine 548. A helical membrane pass occupies residues 698-718 (VYLIIAICAVSSLLVLTLLLY). Residues 719-950 (TALRCSAPPT…GNSTTDNSDQ (232 aa)) lie on the Cytoplasmic side of the membrane. 6 PXXP repeats span residues 734–737 (PGKP), 774–777 (PSLP), 799–802 (PRQP), 832–835 (PGGP), 873–876 (PGNP), and 891–894 (PGSP). The interval 734–894 (PGKPTLVCSS…PDKFIIPGSP (161 aa)) is 6 X 4 AA repeats of P-X-X-P. Disordered stretches follow at residues 774 to 808 (PSLPPCLGSAEGTGQREEDSEGLKEPRQPNPDWRY) and 827 to 950 (ILRA…NSDQ). The segment covering 787-800 (GQREEDSEGLKEPR) has biased composition (basic and acidic residues). Over residues 909–923 (DKSDFITFGKKEETK) the composition is skewed to basic and acidic residues.

It localises to the cell membrane. Its function is as follows. Potential calcium-dependent cell-adhesion protein. May be involved in the establishment and maintenance of specific neuronal connections in the brain. The protein is Protocadherin alpha-13 (PCDHA13) of Pan troglodytes (Chimpanzee).